Here is a 381-residue protein sequence, read N- to C-terminus: rRNA adenine N-6-methyltransferase (381 aa).

The span at 1 to 19 (MSSSDEQPRPRRRNQDRQH) shows a compositional bias: basic and acidic residues. Residues 1-42 (MSSSDEQPRPRRRNQDRQHPNQNRPVLGRTERDRNRRQFGQN) are disordered. N42, L44, G69, E90, D115, and A131 together coordinate S-adenosyl-L-methionine. A disordered region spans residues 282 to 381 (RLDQKNEPRG…PGRRGGPGQR (100 aa)). The segment covering 301 to 358 (GGRDHGDRRTGGQDRGDRRTGGRDHRDRQASGHGDRRSSGRNRDDGRTGEREQGDQGG) has biased composition (basic and acidic residues). Residues 359–381 (RRGPSGGGRTGGRPGRRGGPGQR) show a composition bias toward gly residues.

Belongs to the class I-like SAM-binding methyltransferase superfamily. rRNA adenine N(6)-methyltransferase family.

It carries out the reaction adenosine(2085) in 23S rRNA + 2 S-adenosyl-L-methionine = N(6)-dimethyladenosine(2085) in 23S rRNA + 2 S-adenosyl-L-homocysteine + 2 H(+). In terms of biological role, this protein produces a dimethylation of the adenine residue at position 2085 in 23S rRNA, resulting in reduced affinity between ribosomes and macrolide-lincosamide-streptogramin B antibiotics. This is rRNA adenine N-6-methyltransferase (ermE) from Saccharopolyspora erythraea (strain ATCC 11635 / DSM 40517 / JCM 4748 / NBRC 13426 / NCIMB 8594 / NRRL 2338).